Here is a 155-residue protein sequence, read N- to C-terminus: Ribosomal RNA large subunit methyltransferase H (155 aa).

S-adenosyl-L-methionine-binding positions include leucine 72, glycine 104, and 123–128 (LSRMTF).

Belongs to the RNA methyltransferase RlmH family. As to quaternary structure, homodimer.

Its subcellular location is the cytoplasm. It catalyses the reaction pseudouridine(1915) in 23S rRNA + S-adenosyl-L-methionine = N(3)-methylpseudouridine(1915) in 23S rRNA + S-adenosyl-L-homocysteine + H(+). Its function is as follows. Specifically methylates the pseudouridine at position 1915 (m3Psi1915) in 23S rRNA. The protein is Ribosomal RNA large subunit methyltransferase H of Kosmotoga olearia (strain ATCC BAA-1733 / DSM 21960 / TBF 19.5.1).